We begin with the raw amino-acid sequence, 84 residues long: MARENKKELIGKVVSDKMSKTVVVEIVQRKMHPIYHKYLKVSRRVKAHDEREESKLGDKVKIVESRPISKEKRWRLVEILERSK.

The protein belongs to the universal ribosomal protein uS17 family. As to quaternary structure, part of the 30S ribosomal subunit.

Its function is as follows. One of the primary rRNA binding proteins, it binds specifically to the 5'-end of 16S ribosomal RNA. In Borrelia recurrentis (strain A1), this protein is Small ribosomal subunit protein uS17.